Consider the following 209-residue polypeptide: Transmembrane emp24 domain-containing protein B (209 aa).

Residues 1-24 (MNKTNQLINICILVTLFLIGSSSA) form the signal peptide. Over 25–174 (LTLQVEPKSQ…RDTSESTNAR (150 aa)) the chain is Lumenal. The GOLD domain occupies 34–119 (QECFYNFIES…AKVVTFTWAS (86 aa)). Residues 175 to 195 (VVWWTIAEVIVLVVMGVGQIW) form a helical membrane-spanning segment. The Cytoplasmic segment spans residues 196 to 209 (YLRKWFDNKSTGRV).

This sequence belongs to the EMP24/GP25L family.

It is found in the cytoplasmic vesicle membrane. Could have a role in the budding of coatomer-coated and other species of coated vesicles. The protein is Transmembrane emp24 domain-containing protein B (empB) of Dictyostelium discoideum (Social amoeba).